We begin with the raw amino-acid sequence, 802 residues long: Protein SBE22 (802 aa).

Disordered stretches follow at residues 207–230 and 323–345; these read SSTI…RSNS and SGDP…QRHN.

This sequence belongs to the SBE2 family.

It localises to the cytoplasm. The protein resides in the golgi apparatus. Functionally, with SBE2, is involved in cell wall integrity and polarity processes like bud growth. This Vanderwaltozyma polyspora (strain ATCC 22028 / DSM 70294 / BCRC 21397 / CBS 2163 / NBRC 10782 / NRRL Y-8283 / UCD 57-17) (Kluyveromyces polysporus) protein is Protein SBE22 (SBE22).